The following is a 429-amino-acid chain: UDP-N-acetylglucosamine 1-carboxyvinyltransferase (429 aa).

22-23 (KN) serves as a coordination point for phosphoenolpyruvate. A UDP-N-acetyl-alpha-D-glucosamine-binding site is contributed by R102. The Proton donor role is filled by C126. Position 126 is a 2-(S-cysteinyl)pyruvic acid O-phosphothioketal (C126). Residues 131–135 (RPVDL), D316, and I338 contribute to the UDP-N-acetyl-alpha-D-glucosamine site.

The protein belongs to the EPSP synthase family. MurA subfamily.

It localises to the cytoplasm. It carries out the reaction phosphoenolpyruvate + UDP-N-acetyl-alpha-D-glucosamine = UDP-N-acetyl-3-O-(1-carboxyvinyl)-alpha-D-glucosamine + phosphate. It participates in cell wall biogenesis; peptidoglycan biosynthesis. In terms of biological role, cell wall formation. Adds enolpyruvyl to UDP-N-acetylglucosamine. The protein is UDP-N-acetylglucosamine 1-carboxyvinyltransferase of Rhodopseudomonas palustris (strain BisA53).